A 231-amino-acid polypeptide reads, in one-letter code: NADH-ubiquinone oxidoreductase chain 4 (231 aa).

7 helical membrane passes run 1–21 (PIAG…YGII), 34–54 (MFLP…LTCL), 63–85 (IAYS…TPWG), 89–111 (AMAL…NTTY), 128–148 (ILPM…AIPP), 156–176 (LLIM…LGLS), and 211–231 (LLMI…ELII).

Belongs to the complex I subunit 4 family.

The protein localises to the mitochondrion membrane. It carries out the reaction a ubiquinone + NADH + 5 H(+)(in) = a ubiquinol + NAD(+) + 4 H(+)(out). In terms of biological role, core subunit of the mitochondrial membrane respiratory chain NADH dehydrogenase (Complex I) that is believed to belong to the minimal assembly required for catalysis. Complex I functions in the transfer of electrons from NADH to the respiratory chain. The immediate electron acceptor for the enzyme is believed to be ubiquinone. In Agkistrodon piscivorus piscivorus (Eastern cottonmouth), this protein is NADH-ubiquinone oxidoreductase chain 4 (MT-ND4).